We begin with the raw amino-acid sequence, 988 residues long: UvrABC system protein A (988 aa).

An ATP-binding site is contributed by 33–40; sequence GLSGSGKS. A C4-type zinc finger spans residues 255–282; sequence CPVCDYSLPELEPRLFSFNAPVGACPSC. ABC transporter domains lie at 312-589 and 609-938; these read WDRR…PRSL and PNPK…QFLA. 642–649 lines the ATP pocket; it reads GVSGSGKS. The C4-type zinc finger occupies 741–767; it reads CEACQGDGMIKVEMHFLPDVYVPCDVC. The segment at 948-988 is disordered; sequence ETRPAAMANKPDARPPRKVKPEKVAKATKTATKKTAKKKAS. Residues 958–972 show a composition bias toward basic and acidic residues; that stretch reads PDARPPRKVKPEKVA. A compositionally biased stretch (basic residues) spans 978–988; sequence ATKKTAKKKAS.

This sequence belongs to the ABC transporter superfamily. UvrA family. Forms a heterotetramer with UvrB during the search for lesions.

Its subcellular location is the cytoplasm. The UvrABC repair system catalyzes the recognition and processing of DNA lesions. UvrA is an ATPase and a DNA-binding protein. A damage recognition complex composed of 2 UvrA and 2 UvrB subunits scans DNA for abnormalities. When the presence of a lesion has been verified by UvrB, the UvrA molecules dissociate. This Xanthomonas campestris pv. campestris (strain ATCC 33913 / DSM 3586 / NCPPB 528 / LMG 568 / P 25) protein is UvrABC system protein A.